The following is a 526-amino-acid chain: Probable feruloyl esterase B (526 aa).

Positions 1–18 (MARLSLLTLLALGSAALA) are cleaved as a signal peptide. 2 disulfide bridges follow: Cys-27-Cys-74 and Cys-62-Cys-113. N-linked (GlcNAc...) asparagine glycosylation occurs at Asn-137. Disulfide bonds link Cys-186-Cys-441, Cys-255-Cys-272, Cys-281-Cys-291, and Cys-503-Cys-525. Catalysis depends on Ser-187, which acts as the Acyl-ester intermediate. Asn-233 carries an N-linked (GlcNAc...) asparagine glycan. Residues Asp-256, Asp-259, Ala-261, Asp-263, and Ile-265 each coordinate Ca(2+). N-linked (GlcNAc...) asparagine glycosylation occurs at Asn-311. Active-site charge relay system residues include Asp-400 and His-440. A glycan (N-linked (GlcNAc...) asparagine) is linked at Asn-516.

The protein belongs to the tannase family.

It is found in the secreted. The enzyme catalyses feruloyl-polysaccharide + H2O = ferulate + polysaccharide.. Functionally, involved in degradation of plant cell walls. Hydrolyzes the feruloyl-arabinose ester bond in arabinoxylans as well as the feruloyl-galactose and feruloyl-arabinose ester bonds in pectin. The sequence is that of Probable feruloyl esterase B (faeB) from Aspergillus clavatus (strain ATCC 1007 / CBS 513.65 / DSM 816 / NCTC 3887 / NRRL 1 / QM 1276 / 107).